A 189-amino-acid polypeptide reads, in one-letter code: NADH-quinone oxidoreductase subunit B (189 aa).

Positions 39, 40, 104, and 135 each coordinate [4Fe-4S] cluster.

The protein belongs to the complex I 20 kDa subunit family. NDH-1 is composed of 14 different subunits. Subunits NuoB, C, D, E, F, and G constitute the peripheral sector of the complex. It depends on [4Fe-4S] cluster as a cofactor.

It is found in the cell inner membrane. The enzyme catalyses a quinone + NADH + 5 H(+)(in) = a quinol + NAD(+) + 4 H(+)(out). In terms of biological role, NDH-1 shuttles electrons from NADH, via FMN and iron-sulfur (Fe-S) centers, to quinones in the respiratory chain. The immediate electron acceptor for the enzyme in this species is believed to be a menaquinone. Couples the redox reaction to proton translocation (for every two electrons transferred, four hydrogen ions are translocated across the cytoplasmic membrane), and thus conserves the redox energy in a proton gradient. This chain is NADH-quinone oxidoreductase subunit B, found in Chlorobium phaeobacteroides (strain DSM 266 / SMG 266 / 2430).